Here is a 774-residue protein sequence, read N- to C-terminus: Mastermind-like domain-containing protein 1 (774 aa).

Disordered regions lie at residues 257 to 279 (STGISYSIPSTSKQIVSPSSSMA), 310 to 365 (LAAS…PQSL), 386 to 421 (ALLSSMTSSSNAALGPAMPYAPEKLPSPALTQQPQF), 442 to 473 (HLMSALPASNPGPSPPYRPEKLSSPGLPQQSF), 525 to 609 (GMAS…QPDH), 656 to 678 (PQHQHGNSFTSRQDPQPGDVSPS), and 755 to 774 (LPSCDATARGTEIRSYGNDP). A compositionally biased stretch (pro residues) spans 331-361 (LPPPGLSPPYRPVPSPHPPPLPLPPPPPPFS). Over residues 386–397 (ALLSSMTSSSNA) the composition is skewed to polar residues. Over residues 574-609 (QQPTPTQASSATASSTATATLQLQQQQQQQQQQPDH) the composition is skewed to low complexity. A compositionally biased stretch (polar residues) spans 656–669 (PQHQHGNSFTSRQD). Ser-676 bears the Phosphoserine mark.

The protein belongs to the mastermind family. As to expression, expressed in fetal brain, fetal ovary and fetal testis. Expressed in adult brain, ovary, skin, testis, uterus. Highly expressed in skeletal muscle.

It is found in the nucleus. Functionally, transactivates the HES3 promoter independently of NOTCH proteins. HES3 is a non-canonical NOTCH target gene which lacks binding sites for RBPJ. This chain is Mastermind-like domain-containing protein 1 (MAMLD1), found in Homo sapiens (Human).